The sequence spans 143 residues: Small ribosomal subunit protein eS19x (143 aa).

This sequence belongs to the eukaryotic ribosomal protein eS19 family.

This is Small ribosomal subunit protein eS19x (RPS19C) from Arabidopsis thaliana (Mouse-ear cress).